The following is a 354-amino-acid chain: Holliday junction branch migration complex subunit RuvB (354 aa).

The disordered stretch occupies residues 1–38 (MSDFERTEFELPPGVGHSQNEDLNPQQTAGDSDIDTSL). Residues 2 to 199 (SDFERTEFEL…FGFTAQMEFY (198 aa)) are large ATPase domain (RuvB-L). Residues 17–30 (HSQNEDLNPQQTAG) are compositionally biased toward polar residues. ATP-binding positions include L38, R39, G80, K83, T84, T85, 146–148 (EDF), R189, Y199, and R236. Residue T84 participates in Mg(2+) binding. The tract at residues 200-270 (DTADLTRVVT…VARAALLVFD (71 aa)) is small ATPAse domain (RuvB-S). A head domain (RuvB-H) region spans residues 273–354 (ESGLDRLDRA…LEPPEGTIGL (82 aa)). 2 residues coordinate DNA: R328 and R333.

Belongs to the RuvB family. In terms of assembly, homohexamer. Forms an RuvA(8)-RuvB(12)-Holliday junction (HJ) complex. HJ DNA is sandwiched between 2 RuvA tetramers; dsDNA enters through RuvA and exits via RuvB. An RuvB hexamer assembles on each DNA strand where it exits the tetramer. Each RuvB hexamer is contacted by two RuvA subunits (via domain III) on 2 adjacent RuvB subunits; this complex drives branch migration. In the full resolvosome a probable DNA-RuvA(4)-RuvB(12)-RuvC(2) complex forms which resolves the HJ.

It localises to the cytoplasm. It carries out the reaction ATP + H2O = ADP + phosphate + H(+). Its function is as follows. The RuvA-RuvB-RuvC complex processes Holliday junction (HJ) DNA during genetic recombination and DNA repair, while the RuvA-RuvB complex plays an important role in the rescue of blocked DNA replication forks via replication fork reversal (RFR). RuvA specifically binds to HJ cruciform DNA, conferring on it an open structure. The RuvB hexamer acts as an ATP-dependent pump, pulling dsDNA into and through the RuvAB complex. RuvB forms 2 homohexamers on either side of HJ DNA bound by 1 or 2 RuvA tetramers; 4 subunits per hexamer contact DNA at a time. Coordinated motions by a converter formed by DNA-disengaged RuvB subunits stimulates ATP hydrolysis and nucleotide exchange. Immobilization of the converter enables RuvB to convert the ATP-contained energy into a lever motion, pulling 2 nucleotides of DNA out of the RuvA tetramer per ATP hydrolyzed, thus driving DNA branch migration. The RuvB motors rotate together with the DNA substrate, which together with the progressing nucleotide cycle form the mechanistic basis for DNA recombination by continuous HJ branch migration. Branch migration allows RuvC to scan DNA until it finds its consensus sequence, where it cleaves and resolves cruciform DNA. This is Holliday junction branch migration complex subunit RuvB from Corynebacterium jeikeium (strain K411).